A 1367-amino-acid polypeptide reads, in one-letter code: Dynactin, 150 kDa isoform (1367 aa).

The CAP-Gly domain maps to 28–70 (GETAFAPGTWVGIELDEPSGKNDGSVQGERYFNCEMGYGMFVR). The interval 76-318 (VIAQPPPPPP…NLKATTITPR (243 aa)) is disordered. Composition is skewed to low complexity over residues 88-99 (TFRRSVTTRPTS) and 132-149 (PSRTSSTSITRSPTRSPT). Positions 150–163 (KQLATASSSGNPSR) are enriched in polar residues. Composition is skewed to low complexity over residues 164–190 (SGTPSTTTKPAGPTTRTRPSLSTSRHS) and 243–259 (STGSVSSVGKSGFKRGS). Coiled-coil stretches lie at residues 321 to 598 (ITNT…MQEE), 637 to 698 (LQSD…EAEQ), and 1039 to 1199 (AELK…RARL).

It belongs to the dynactin 150 kDa subunit family. Large macromolecular complex of at least 10 components; p150(glued) binds directly to microtubules and to cytoplasmic dynein.

The protein resides in the cytoplasm. The protein localises to the cytoskeleton. Its function is as follows. Required for the cytoplasmic dynein-driven retrograde movement of vesicles and organelles along microtubules. Dynein-dynactin interaction is a key component of the mechanism of axonal transport of vesicles and organelles. This is Dynactin, 150 kDa isoform (ro-3) from Neurospora crassa (strain ATCC 24698 / 74-OR23-1A / CBS 708.71 / DSM 1257 / FGSC 987).